Reading from the N-terminus, the 882-residue chain is Valine--tRNA ligase (882 aa).

Positions proline 45 to histidine 55 match the 'HIGH' region motif. A 'KMSKS' region motif is present at residues lysine 519 to serine 523. Lysine 522 contributes to the ATP binding site. The stretch at leucine 808–lysine 882 forms a coiled coil.

This sequence belongs to the class-I aminoacyl-tRNA synthetase family. ValS type 1 subfamily. In terms of assembly, monomer.

It localises to the cytoplasm. The enzyme catalyses tRNA(Val) + L-valine + ATP = L-valyl-tRNA(Val) + AMP + diphosphate. Its function is as follows. Catalyzes the attachment of valine to tRNA(Val). As ValRS can inadvertently accommodate and process structurally similar amino acids such as threonine, to avoid such errors, it has a 'posttransfer' editing activity that hydrolyzes mischarged Thr-tRNA(Val) in a tRNA-dependent manner. The protein is Valine--tRNA ligase of Streptococcus pyogenes serotype M3 (strain ATCC BAA-595 / MGAS315).